The chain runs to 495 residues: 3-octaprenyl-4-hydroxybenzoate carboxy-lyase (495 aa).

Asn-171 contributes to the Mn(2+) binding site. Prenylated FMN is bound by residues 174–176, 188–190, and 193–194; these read IYR, RWL, and RG. Position 237 (Glu-237) interacts with Mn(2+). Residue Asp-286 is the Proton donor of the active site.

It belongs to the UbiD family. In terms of assembly, homohexamer. The cofactor is prenylated FMN. Mn(2+) is required as a cofactor.

It is found in the cell membrane. The catalysed reaction is a 4-hydroxy-3-(all-trans-polyprenyl)benzoate + H(+) = a 2-(all-trans-polyprenyl)phenol + CO2. It functions in the pathway cofactor biosynthesis; ubiquinone biosynthesis. Its function is as follows. Catalyzes the decarboxylation of 3-octaprenyl-4-hydroxy benzoate to 2-octaprenylphenol, an intermediate step in ubiquinone biosynthesis. The chain is 3-octaprenyl-4-hydroxybenzoate carboxy-lyase from Hamiltonella defensa subsp. Acyrthosiphon pisum (strain 5AT).